The chain runs to 172 residues: Adenine phosphoribosyltransferase (172 aa).

It belongs to the purine/pyrimidine phosphoribosyltransferase family. As to quaternary structure, homodimer.

Its subcellular location is the cytoplasm. The enzyme catalyses AMP + diphosphate = 5-phospho-alpha-D-ribose 1-diphosphate + adenine. It participates in purine metabolism; AMP biosynthesis via salvage pathway; AMP from adenine: step 1/1. In terms of biological role, catalyzes a salvage reaction resulting in the formation of AMP, that is energically less costly than de novo synthesis. This chain is Adenine phosphoribosyltransferase, found in Clostridium tetani (strain Massachusetts / E88).